Consider the following 156-residue polypeptide: Protein-export protein SecB (156 aa).

It belongs to the SecB family. Homotetramer, a dimer of dimers. One homotetramer interacts with 1 SecA dimer.

The protein resides in the cytoplasm. In terms of biological role, one of the proteins required for the normal export of preproteins out of the cell cytoplasm. It is a molecular chaperone that binds to a subset of precursor proteins, maintaining them in a translocation-competent state. It also specifically binds to its receptor SecA. This chain is Protein-export protein SecB, found in Serratia proteamaculans (strain 568).